The sequence spans 549 residues: Guanine nucleotide-binding protein-like 3 (549 aa).

Positions 1-45 are enriched in basic residues; the sequence is MKRPKLKKASKRMTCHKRYKIQKKVREHHRKLRKEAKKRGHKKPR. Disordered stretches follow at residues 1-56 and 73-104; these read MKRP…SAPF and ELKQ…SNVE. Residues 2–46 form a basic region; that stretch reads KRPKLKKASKRMTCHKRYKIQKKVREHHRKLRKEAKKRGHKKPRK. Residues 56-95 are a coiled coil; the sequence is FKEALLREAELRKQRLEELKQQQKLDRQKELEKKRKLETN. Residues 73–96 are compositionally biased toward basic and acidic residues; the sequence is ELKQQQKLDRQKELEKKRKLETNP. Lys79 bears the N6-acetyllysine mark. Glycyl lysine isopeptide (Lys-Gly) (interchain with G-Cter in SUMO2) cross-links involve residues Lys91 and Lys99. Ser101 bears the Phosphoserine mark. Residues Lys114, Lys179, Lys196, Lys253, Lys267, and Lys275 each participate in a glycyl lysine isopeptide (Lys-Gly) (interchain with G-Cter in SUMO2) cross-link. Residues 131–312 enclose the CP-type G domain; that stretch reads CQELKKVIEA…IIDSPSFIVS (182 aa). A GTP-binding site is contributed by 178–181; it reads NKSD. Position 261-268 (261-268) interacts with GTP; it reads GFPNVGKS. Positions 282 to 456 are intermediate; it reads VGVSMGLTRS…HLANSILFQS (175 aa). A GTP-binding site is contributed by 305-308; the sequence is DSPS. Residues 465-543 are acidic; sequence EEKDIHEELP…KIIEEDDAYD (79 aa). Residues 474–483 show a composition bias toward basic and acidic residues; the sequence is PKRKERKQEE. Residues 474-532 form a disordered region; it reads PKRKERKQEEREDDKDSDQETVDEEVDENSSGMFAAEETGEALSEETTAGEQSTRSFIL. Residues 484 to 501 are compositionally biased toward acidic residues; that stretch reads REDDKDSDQETVDEEVDE. 4 positions are modified to phosphoserine: Ser490, Ser504, Ser517, and Ser529. Residues 518 to 529 are compositionally biased toward polar residues; sequence EETTAGEQSTRS.

This sequence belongs to the TRAFAC class YlqF/YawG GTPase family. As to quaternary structure, interacts with MDM2; this interaction stabilizes MDM2. Interaction with MDM2 occurs in the nucleoplasm and is triggered by a nucleolar release mechanism, such as mitosis-induced nucleolar disassembly. Indirectly interacts with TP53, via MDM2-binding. Interacts with TSC22D1 isoform 2. In terms of tissue distribution, increased levels in lung tissue in cancer patients.

Its subcellular location is the nucleus. The protein resides in the nucleolus. Functionally, may be required to maintain the proliferative capacity of stem cells. Stabilizes MDM2 by preventing its ubiquitination, and hence proteasomal degradation. This Homo sapiens (Human) protein is Guanine nucleotide-binding protein-like 3 (GNL3).